A 320-amino-acid chain; its full sequence is L-lactate dehydrogenase 1 (320 aa).

NAD(+) contacts are provided by residues Val18, Asp39, Arg44, Tyr69, and 83 to 84; that span reads GA. Substrate is bound by residues Gln86 and Arg92. Residues Ser105, 122–124, and Ser147 contribute to the NAD(+) site; that span reads AAN. 124–127 serves as a coordination point for substrate; sequence NPVD. 152 to 155 lines the substrate pocket; that stretch reads DSSR. Catalysis depends on His179, which acts as the Proton acceptor. Residue Tyr223 is modified to Phosphotyrosine. A substrate-binding site is contributed by Thr232.

Belongs to the LDH/MDH superfamily. LDH family. Homotetramer.

It is found in the cytoplasm. It catalyses the reaction (S)-lactate + NAD(+) = pyruvate + NADH + H(+). It functions in the pathway fermentation; pyruvate fermentation to lactate; (S)-lactate from pyruvate: step 1/1. In terms of biological role, catalyzes the conversion of lactate to pyruvate. The polypeptide is L-lactate dehydrogenase 1 (Lactiplantibacillus plantarum (strain ATCC BAA-793 / NCIMB 8826 / WCFS1) (Lactobacillus plantarum)).